A 129-amino-acid polypeptide reads, in one-letter code: MARKQVSRKRRVKKNIENGVAHIRSTFNNTIVTITDEFGNALSWSSAGALGFKGSKKSTPFAAQMASETASKSAMEHGLKTVEVTVKGPGPGRESAIRALQSAGLEVTAIRDVTPVPHNGCRPPKRRRV.

It belongs to the universal ribosomal protein uS11 family. As to quaternary structure, part of the 30S ribosomal subunit. Interacts with proteins S7 and S18. Binds to IF-3.

Functionally, located on the platform of the 30S subunit, it bridges several disparate RNA helices of the 16S rRNA. Forms part of the Shine-Dalgarno cleft in the 70S ribosome. In Staphylococcus haemolyticus (strain JCSC1435), this protein is Small ribosomal subunit protein uS11.